A 165-amino-acid chain; its full sequence is MPLNREDKQAVVAEVAAQVAKAQTVVLAEYRGIAVGDLTKLRAQAREKQVYLRVLKNTLARRAVEGTPFAPLAEQMTGPLIYGISEDAIAAAKVVNDFSKSNDKLVIKAGSFDGKVMDKAGVQALASIPSREELLSKLLFVMQSPVSGFARALAALAEKKQAEAA.

This sequence belongs to the universal ribosomal protein uL10 family. As to quaternary structure, part of the ribosomal stalk of the 50S ribosomal subunit. The N-terminus interacts with L11 and the large rRNA to form the base of the stalk. The C-terminus forms an elongated spine to which L12 dimers bind in a sequential fashion forming a multimeric L10(L12)X complex.

Its function is as follows. Forms part of the ribosomal stalk, playing a central role in the interaction of the ribosome with GTP-bound translation factors. This chain is Large ribosomal subunit protein uL10, found in Burkholderia ambifaria (strain MC40-6).